A 176-amino-acid chain; its full sequence is NAD(P)H-quinone oxidoreductase subunit 6, chloroplastic (176 aa).

5 helical membrane passes run phenylalanine 10–threonine 30, proline 32–leucine 52, alanine 61–methionine 81, leucine 92–isoleucine 112, and phenylalanine 152–alanine 172.

The protein belongs to the complex I subunit 6 family. As to quaternary structure, NDH is composed of at least 16 different subunits, 5 of which are encoded in the nucleus.

Its subcellular location is the plastid. It localises to the chloroplast thylakoid membrane. The enzyme catalyses a plastoquinone + NADH + (n+1) H(+)(in) = a plastoquinol + NAD(+) + n H(+)(out). It catalyses the reaction a plastoquinone + NADPH + (n+1) H(+)(in) = a plastoquinol + NADP(+) + n H(+)(out). Functionally, NDH shuttles electrons from NAD(P)H:plastoquinone, via FMN and iron-sulfur (Fe-S) centers, to quinones in the photosynthetic chain and possibly in a chloroplast respiratory chain. The immediate electron acceptor for the enzyme in this species is believed to be plastoquinone. Couples the redox reaction to proton translocation, and thus conserves the redox energy in a proton gradient. This is NAD(P)H-quinone oxidoreductase subunit 6, chloroplastic (ndhG) from Pelargonium hortorum (Common geranium).